The chain runs to 293 residues: uncharacterized protein (293 aa).

Residues Thr-43 and Tyr-105 each act as charge relay system in the active site. Tyr-131 acts as the Proton donor in catalysis. The active-site Schiff-base intermediate with substrate is Lys-159.

Belongs to the DapA family. Homotetramer.

It is found in the cytoplasm. This is an uncharacterized protein from Thermococcus onnurineus (strain NA1).